Here is a 246-residue protein sequence, read N- to C-terminus: Probable transcriptional regulatory protein Teth39_1009 (246 aa).

The tract at residues 1 to 21 (MSGHSKWANIKHKKEKMDAKK) is disordered.

Belongs to the TACO1 family.

It is found in the cytoplasm. The chain is Probable transcriptional regulatory protein Teth39_1009 from Thermoanaerobacter pseudethanolicus (strain ATCC 33223 / 39E) (Clostridium thermohydrosulfuricum).